We begin with the raw amino-acid sequence, 256 residues long: Enolase-phosphatase E1 (256 aa).

Residues Asp-13 and Glu-15 each coordinate Mg(2+). Substrate contacts are provided by residues 127–128 (SS) and Lys-175. Asp-202 contributes to the Mg(2+) binding site.

Belongs to the HAD-like hydrolase superfamily. MasA/MtnC family. As to quaternary structure, monomer. Requires Mg(2+) as cofactor.

Its subcellular location is the cytoplasm. The protein localises to the nucleus. The enzyme catalyses 5-methylsulfanyl-2,3-dioxopentyl phosphate + H2O = 1,2-dihydroxy-5-(methylsulfanyl)pent-1-en-3-one + phosphate. The protein operates within amino-acid biosynthesis; L-methionine biosynthesis via salvage pathway; L-methionine from S-methyl-5-thio-alpha-D-ribose 1-phosphate: step 3/6. It functions in the pathway amino-acid biosynthesis; L-methionine biosynthesis via salvage pathway; L-methionine from S-methyl-5-thio-alpha-D-ribose 1-phosphate: step 4/6. Its function is as follows. Bifunctional enzyme that catalyzes the enolization of 2,3-diketo-5-methylthiopentyl-1-phosphate (DK-MTP-1-P) into the intermediate 2-hydroxy-3-keto-5-methylthiopentenyl-1-phosphate (HK-MTPenyl-1-P), which is then dephosphorylated to form the acireductone 1,2-dihydroxy-3-keto-5-methylthiopentene (DHK-MTPene). The protein is Enolase-phosphatase E1 (utr4) of Botryotinia fuckeliana (strain B05.10) (Noble rot fungus).